The primary structure comprises 108 residues: UPF0145 protein AF_0869 (108 aa).

This sequence belongs to the UPF0145 family.

This chain is UPF0145 protein AF_0869, found in Archaeoglobus fulgidus (strain ATCC 49558 / DSM 4304 / JCM 9628 / NBRC 100126 / VC-16).